The primary structure comprises 100 residues: Large ribosomal subunit protein bL28 (100 aa).

It belongs to the bacterial ribosomal protein bL28 family.

This chain is Large ribosomal subunit protein bL28, found in Ehrlichia ruminantium (strain Gardel).